The primary structure comprises 385 residues: Methylthioribose-1-phosphate isomerase (385 aa).

Asp256 acts as the Proton donor in catalysis.

Belongs to the eIF-2B alpha/beta/delta subunits family. MtnA subfamily.

The protein resides in the cytoplasm. The protein localises to the nucleus. The enzyme catalyses 5-(methylsulfanyl)-alpha-D-ribose 1-phosphate = 5-(methylsulfanyl)-D-ribulose 1-phosphate. It participates in amino-acid biosynthesis; L-methionine biosynthesis via salvage pathway; L-methionine from S-methyl-5-thio-alpha-D-ribose 1-phosphate: step 1/6. Functionally, catalyzes the interconversion of methylthioribose-1-phosphate (MTR-1-P) into methylthioribulose-1-phosphate (MTRu-1-P). This Arthroderma otae (strain ATCC MYA-4605 / CBS 113480) (Microsporum canis) protein is Methylthioribose-1-phosphate isomerase.